We begin with the raw amino-acid sequence, 862 residues long: DNA mismatch repair protein MutS (862 aa).

Position 608–615 (608–615 (GPNMAGKS)) interacts with ATP.

This sequence belongs to the DNA mismatch repair MutS family.

Its function is as follows. This protein is involved in the repair of mismatches in DNA. It is possible that it carries out the mismatch recognition step. This protein has a weak ATPase activity. This Bacteroides thetaiotaomicron (strain ATCC 29148 / DSM 2079 / JCM 5827 / CCUG 10774 / NCTC 10582 / VPI-5482 / E50) protein is DNA mismatch repair protein MutS.